Consider the following 601-residue polypeptide: Glutamine--fructose-6-phosphate aminotransferase [isomerizing] (601 aa).

Cys2 functions as the Nucleophile; for GATase activity in the catalytic mechanism. The region spanning 2 to 218 (CGIVGYIGYD…DHEIVIVKRD (217 aa)) is the Glutamine amidotransferase type-2 domain. 2 SIS domains span residues 284–423 (IIND…NHGR) and 453–591 (IATD…VDKP). The active-site For Fru-6P isomerization activity is the Lys596.

Homodimer.

It localises to the cytoplasm. The catalysed reaction is D-fructose 6-phosphate + L-glutamine = D-glucosamine 6-phosphate + L-glutamate. Its function is as follows. Catalyzes the first step in hexosamine metabolism, converting fructose-6P into glucosamine-6P using glutamine as a nitrogen source. This chain is Glutamine--fructose-6-phosphate aminotransferase [isomerizing], found in Staphylococcus epidermidis (strain ATCC 35984 / DSM 28319 / BCRC 17069 / CCUG 31568 / BM 3577 / RP62A).